A 324-amino-acid chain; its full sequence is Probable pectinesterase A (324 aa).

An N-terminal signal peptide occupies residues 1-19 (MYLPSLVLGLLGFGLTAST). A glycan (N-linked (GlcNAc...) asparagine) is linked at Asn-27. Gln-142 lines the substrate pocket. Asp-165 (proton donor) is an active-site residue. Asp-186 (nucleophile) is an active-site residue. The substrate site is built by Arg-246 and Trp-248.

Belongs to the pectinesterase family.

It localises to the secreted. The enzyme catalyses [(1-&gt;4)-alpha-D-galacturonosyl methyl ester](n) + n H2O = [(1-&gt;4)-alpha-D-galacturonosyl](n) + n methanol + n H(+). Its pathway is glycan metabolism; pectin degradation; 2-dehydro-3-deoxy-D-gluconate from pectin: step 1/5. Functionally, involved in maceration and soft-rotting of plant tissue. The chain is Probable pectinesterase A (pmeA) from Aspergillus fumigatus (strain CBS 144.89 / FGSC A1163 / CEA10) (Neosartorya fumigata).